The primary structure comprises 597 residues: Protein Spindly (597 aa).

Residue methionine 1 is modified to N-acetylmethionine. A coiled-coil region spans residues 1-445; that stretch reads MEADITNLRN…LKLKYEPEER (445 aa). Serine 508 and serine 547 each carry phosphoserine. Residues 531 to 597 are disordered; that stretch reads PASTEVLHEQ…STPEMQCPQQ (67 aa). Over residues 540–549 the composition is skewed to polar residues; the sequence is QSGNTPSSPR. Residues 550–574 show a composition bias toward basic and acidic residues; that stretch reads LTEESRLPTKVKERKEATSKLEKGA. Over residues 583–597 the composition is skewed to polar residues; the sequence is YVSSKSTPEMQCPQQ.

Belongs to the Spindly family. As to quaternary structure, interacts with KNTC1 and ZW10. These interactions appear weak and may be transient or indirect. Interacts with dynein intermediate chain and dynactin (DCTN1). Interacts with the catalytically active form of USP45. Monoubiquitinated with'Lys-48' linkage. Deubiquitinated by USP45.

It localises to the cytoplasm. The protein resides in the cytoskeleton. It is found in the microtubule organizing center. The protein localises to the centrosome. Its subcellular location is the chromosome. It localises to the centromere. The protein resides in the kinetochore. It is found in the nucleus. The protein localises to the spindle pole. Required for the localization of dynein and dynactin to the mitotic kintochore. Dynein is believed to control the initial lateral interaction between the kinetochore and spindle microtubules and to facilitate the subsequent formation of end-on kinetochore-microtubule attachments mediated by the NDC80 complex. Also required for correct spindle orientation. Does not appear to be required for the removal of spindle assembly checkpoint (SAC) proteins from the kinetochore upon bipolar spindle attachment. Acts as an adapter protein linking the dynein motor complex to various cargos and converts dynein from a non-processive to a highly processive motor in the presence of dynactin. Facilitates the interaction between dynein and dynactin and activates dynein processivity (the ability to move along a microtubule for a long distance without falling off the track). Plays a role in cell migration. The protein is Protein Spindly (Spdl1) of Rattus norvegicus (Rat).